The following is a 220-amino-acid chain: Large ribosomal subunit protein bL25 (220 aa).

The protein belongs to the bacterial ribosomal protein bL25 family. CTC subfamily. In terms of assembly, part of the 50S ribosomal subunit; part of the 5S rRNA/L5/L18/L25 subcomplex. Contacts the 5S rRNA. Binds to the 5S rRNA independently of L5 and L18.

This is one of the proteins that binds to the 5S RNA in the ribosome where it forms part of the central protuberance. In Zymomonas mobilis subsp. mobilis (strain ATCC 31821 / ZM4 / CP4), this protein is Large ribosomal subunit protein bL25.